Here is a 379-residue protein sequence, read N- to C-terminus: 23S rRNA (uracil(747)-C(5))-methyltransferase RlmC (379 aa).

Residues C3, C11, C14, and C87 each coordinate [4Fe-4S] cluster. Q212, F241, E262, and N309 together coordinate S-adenosyl-L-methionine. The Nucleophile role is filled by C336.

The protein belongs to the class I-like SAM-binding methyltransferase superfamily. RNA M5U methyltransferase family. RlmC subfamily.

It carries out the reaction uridine(747) in 23S rRNA + S-adenosyl-L-methionine = 5-methyluridine(747) in 23S rRNA + S-adenosyl-L-homocysteine + H(+). Catalyzes the formation of 5-methyl-uridine at position 747 (m5U747) in 23S rRNA. This is 23S rRNA (uracil(747)-C(5))-methyltransferase RlmC from Shewanella loihica (strain ATCC BAA-1088 / PV-4).